We begin with the raw amino-acid sequence, 530 residues long: Glucose-6-phosphate isomerase (530 aa).

Glu-356 (proton donor) is an active-site residue. Active-site residues include His-387 and Lys-502.

It belongs to the GPI family.

The protein resides in the cytoplasm. It catalyses the reaction alpha-D-glucose 6-phosphate = beta-D-fructose 6-phosphate. The protein operates within carbohydrate biosynthesis; gluconeogenesis. It participates in carbohydrate degradation; glycolysis; D-glyceraldehyde 3-phosphate and glycerone phosphate from D-glucose: step 2/4. In terms of biological role, catalyzes the reversible isomerization of glucose-6-phosphate to fructose-6-phosphate. The sequence is that of Glucose-6-phosphate isomerase from Borreliella burgdorferi (strain ATCC 35210 / DSM 4680 / CIP 102532 / B31) (Borrelia burgdorferi).